The primary structure comprises 294 residues: Non-selective voltage-gated ion channel VDAC2 (294 aa).

A2 carries the post-translational modification N-acetylalanine. Residues K23 and K31 each coordinate ATP. K31 carries the post-translational modification N6-acetyllysine; alternate. An N6-succinyllysine; alternate modification is found at K31. A Glycyl lysine isopeptide (Lys-Gly) (interchain with G-Cter in ubiquitin); alternate cross-link involves residue K31. 2 beta stranded membrane-spanning segments follow: residues 37-46 (LVKLDVKTKS) and 50-58 (VEFSTSGSS). K64 is covalently cross-linked (Glycyl lysine isopeptide (Lys-Gly) (interchain with G-Cter in ubiquitin)). The beta stranded transmembrane segment at 65–75 (VTGTLETKYKW) threads the bilayer. Y78 carries the post-translational modification Phosphotyrosine. The next 3 beta stranded transmembrane spans lie at 80–87 (LTFTEKWN), 91–100 (TLGTEIAIED), and 106–115 (LKLTFDTTFS). A Phosphothreonine modification is found at T118. K120 carries the N6-acetyllysine; alternate modification. A Glycyl lysine isopeptide (Lys-Gly) (interchain with G-Cter in ubiquitin); alternate cross-link involves residue K120. Residue K121 forms a Glycyl lysine isopeptide (Lys-Gly) (interchain with G-Cter in ubiquitin) linkage. 4 consecutive transmembrane segments (beta stranded) span residues 122–131 (SGKIKSSYKR), 134–141 (VNLGCDVD), 148–156 (AIHGSAVFG), and 161–169 (LAGYQMTFD). K172 is covalently cross-linked (Glycyl lysine isopeptide (Lys-Gly) (interchain with G-Cter in ubiquitin)). The next 6 membrane-spanning stretches (beta stranded) occupy residues 174-186 (KLTR…GYRT), 189-196 (FQLHTNVN), 200-209 (EFGGSIYQKV), 213-222 (LDTSVNLAWT), 229-238 (RFGIAAKYQL), and 242-249 (ASISAKVN). S251 carries the phosphoserine modification. NAD(+) contacts are provided by residues 253-255 (LIG) and 271-275 (SALVD). Beta stranded transmembrane passes span 253-262 (LIGVGYTQTL) and 265-274 (GVKLTLSALV). Position 277 is an N6-acetyllysine; alternate (K277). Residue K277 forms a Glycyl lysine isopeptide (Lys-Gly) (interchain with G-Cter in ubiquitin); alternate linkage. The chain crosses the membrane as a beta stranded span at residues 284–293 (HKLGLALELE).

The protein belongs to the eukaryotic mitochondrial porin family. In terms of assembly, monomer, homodimer and higher order oligomers; formation of higher order structures is necessary for scramblase activity. Interacts with ARMC12 in a TBC1D21-dependent manner. Interacts with KLC3. Interacts with SPATA33. Interacts with PPP3CC in a SPATA33-dependent manner. In terms of processing, ubiquitinated by PRKN during mitophagy, leading to its degradation and enhancement of mitophagy. Deubiquitinated by USP30.

The protein resides in the mitochondrion outer membrane. Its subcellular location is the membrane. It catalyses the reaction chloride(in) = chloride(out). The catalysed reaction is K(+)(in) = K(+)(out). The enzyme catalyses a 1,2-diacyl-sn-glycero-3-phospho-L-serine(in) = a 1,2-diacyl-sn-glycero-3-phospho-L-serine(out). It carries out the reaction a 1,2-diacyl-sn-glycero-3-phosphocholine(in) = a 1,2-diacyl-sn-glycero-3-phosphocholine(out). It catalyses the reaction a 1,2-diacyl-sn-glycero-3-phospho-(1D-myo-inositol)(in) = a 1,2-diacyl-sn-glycero-3-phospho-(1D-myo-inositol)(out). Non-selective voltage-gated ion channel that mediates the transport of anions and cations through the mitochondrion outer membrane and plasma membrane. The channel adopts an open conformation at zero mV and a closed conformation at both positive and negative potentials. There are two populations of channels; the main that functions in a lower open-state conductance with lower ion selectivity, that switch, in a voltage-dependent manner, from the open to a low-conducting 'closed' state and the other that has a normal ion selectivity in the typical high conductance, 'open' state. Binds various lipids, including the sphingolipid ceramide, the phospholipid phosphatidylcholine, and the sterols cholesterol and oxysterol. Binding of ceramide promotes the mitochondrial outer membrane permeabilization (MOMP) apoptotic pathway. Functionally, catalyzes the scrambling of phospholipids across the outer mitochondrial membrane; the mechanism is unrelated to channel activity and is capable of translocating both anionic and zwitterionic phospholipids. In Sus scrofa (Pig), this protein is Non-selective voltage-gated ion channel VDAC2.